Here is a 677-residue protein sequence, read N- to C-terminus: DNA ligase (677 aa).

Residues 34–38 (DLAFD), 83–84 (SL), and E115 contribute to the NAD(+) site. The N6-AMP-lysine intermediate role is filled by K117. NAD(+)-binding residues include R138, E180, K297, and K321. Positions 416, 419, 434, and 439 each coordinate Zn(2+). Positions 596–677 (KKTSQLAGLT…LIKMLETEQA (82 aa)) constitute a BRCT domain.

Belongs to the NAD-dependent DNA ligase family. LigA subfamily. It depends on Mg(2+) as a cofactor. Requires Mn(2+) as cofactor.

The enzyme catalyses NAD(+) + (deoxyribonucleotide)n-3'-hydroxyl + 5'-phospho-(deoxyribonucleotide)m = (deoxyribonucleotide)n+m + AMP + beta-nicotinamide D-nucleotide.. In terms of biological role, DNA ligase that catalyzes the formation of phosphodiester linkages between 5'-phosphoryl and 3'-hydroxyl groups in double-stranded DNA using NAD as a coenzyme and as the energy source for the reaction. It is essential for DNA replication and repair of damaged DNA. The polypeptide is DNA ligase (Acidobacterium capsulatum (strain ATCC 51196 / DSM 11244 / BCRC 80197 / JCM 7670 / NBRC 15755 / NCIMB 13165 / 161)).